A 769-amino-acid polypeptide reads, in one-letter code: MEPRSLQLLEFPKVLNVLSGHCVSTSGAEACLALSPMDDAGSINSTAQFFRQGQNFVKETGFRLGTFPPLEGLFQYLVKPNNVLDADALYALVQTLGQARTLKEALEIAEKREWDTILEFLEGVSWPEKTFSGLKRCLDQDGNIKDESSPELYDIRQSIRSLHQRCSKKVRDFIHGEDISRFLQDDFMTITNDRYVLPLKTNFKGRLQGIVHDYSNTGETCYFEPMFLVELNNSMQELKQQERTEELKILTYLTGLVRSEYDQCEAAYGFLVEYDVLQAKINFADAVKAVAVDVQSGAGFDLRGARHPLLASAVGGVNPLNIELPTDQKVLIVSGGNAGGKTVCLKTVGLLSAMAFSGIPVPVEKGSVLPLFKEIFVIMGDEQSLEENVSTFSAQIQSISRIWDSMDSSTLFILDEFGSGTDPAQGAALAQAVVDGLLENGVTCFAATHFPALKTYALVTEGVRAASVLFDPSTKKPLFSLAYDQVGASIALDVAREHGFPESLLAKAEQYLLMEGSDSGSVMNRLNELAVSREKELEEMDRIKAKLESKRAKLEEKFERERLTVLADVKKQAQSVLKEWQDGKIGRKQALKKLSEARSTIGGDEKPKSDVKPFSFDDIKVGKPILNISWNRKGVVIEKDERKKRVKVDMDGVAMWIPADQLGPVGKKAVQEKVRQVTEKADKKAPKGEMTLKIDLRGKRADVAISELDRFFDQALLRGATELEIVHGRGTGALRREVHIFLDDNPAVAGYSLAPEDRGGDGMTEVELV.

335-342 is an ATP binding site; that stretch reads GGNAGGKT. In terms of domain architecture, Smr spans 694-769; it reads IDLRGKRADV…GDGMTEVELV (76 aa).

Belongs to the DNA mismatch repair MutS family. MutS2 subfamily. As to quaternary structure, homodimer. Binds to stalled ribosomes, contacting rRNA.

Its function is as follows. Endonuclease that is involved in the suppression of homologous recombination and thus may have a key role in the control of bacterial genetic diversity. In terms of biological role, acts as a ribosome collision sensor, splitting the ribosome into its 2 subunits. Detects stalled/collided 70S ribosomes which it binds and splits by an ATP-hydrolysis driven conformational change. Acts upstream of the ribosome quality control system (RQC), a ribosome-associated complex that mediates the extraction of incompletely synthesized nascent chains from stalled ribosomes and their subsequent degradation. Probably generates substrates for RQC. The sequence is that of Endonuclease MutS2 from Maridesulfovibrio salexigens (strain ATCC 14822 / DSM 2638 / NCIMB 8403 / VKM B-1763) (Desulfovibrio salexigens).